Consider the following 876-residue polypeptide: ATPase WRNIP1 (876 aa).

2 stretches are compositionally biased toward low complexity: residues 56–85 (NKSN…TPTK) and 104–175 (NNNN…INNN). Positions 56–175 (NKSNGNNSIN…NNNNNNINNN (120 aa)) are disordered. Residue 240–246 (PGCGKTT) coordinates ATP. Disordered regions lie at residues 621 to 647 (KDRQ…PQQQ), 714 to 737 (INNK…LNPT), and 833 to 876 (ETKA…SLDF). 2 stretches are compositionally biased toward low complexity: residues 626 to 647 (SQDQ…PQQQ) and 714 to 731 (INNK…VNNS). Residues 835–849 (KAISSTDTKESVSIN) are compositionally biased toward polar residues. Over residues 850–863 (DSDKDLTTTHKNEQ) the composition is skewed to basic and acidic residues.

This sequence belongs to the AAA ATPase family. RarA/MGS1/WRNIP1 subfamily.

The protein localises to the nucleus. The catalysed reaction is ATP + H2O = ADP + phosphate + H(+). Functions as a modulator for initiation or reinitiation events during DNA polymerase delta-mediated DNA synthesis. Has an intrinsic ATPase activity that functions as a sensor of DNA damage or of arrested replication forks and regulates the extent of DNA synthesis. The polypeptide is ATPase WRNIP1 (Dictyostelium discoideum (Social amoeba)).